A 212-amino-acid chain; its full sequence is Thymidylate kinase (212 aa).

11-18 (GPEGAGKT) contributes to the ATP binding site.

Belongs to the thymidylate kinase family.

It catalyses the reaction dTMP + ATP = dTDP + ADP. In terms of biological role, phosphorylation of dTMP to form dTDP in both de novo and salvage pathways of dTTP synthesis. The protein is Thymidylate kinase of Streptococcus pneumoniae serotype 2 (strain D39 / NCTC 7466).